Here is a 335-residue protein sequence, read N- to C-terminus: Nucleoid-associated protein YejK (335 aa).

It belongs to the YejK family.

The protein localises to the cytoplasm. The protein resides in the nucleoid. This chain is Nucleoid-associated protein YejK, found in Salmonella enteritidis PT4 (strain P125109).